A 179-amino-acid chain; its full sequence is Large ribosomal subunit protein uL5 (179 aa).

The protein belongs to the universal ribosomal protein uL5 family. In terms of assembly, part of the 50S ribosomal subunit; part of the 5S rRNA/L5/L18/L25 subcomplex. Contacts the 5S rRNA and the P site tRNA. Forms a bridge to the 30S subunit in the 70S ribosome.

In terms of biological role, this is one of the proteins that bind and probably mediate the attachment of the 5S RNA into the large ribosomal subunit, where it forms part of the central protuberance. In the 70S ribosome it contacts protein S13 of the 30S subunit (bridge B1b), connecting the 2 subunits; this bridge is implicated in subunit movement. Contacts the P site tRNA; the 5S rRNA and some of its associated proteins might help stabilize positioning of ribosome-bound tRNAs. This is Large ribosomal subunit protein uL5 from Oceanobacillus iheyensis (strain DSM 14371 / CIP 107618 / JCM 11309 / KCTC 3954 / HTE831).